A 188-amino-acid polypeptide reads, in one-letter code: Elongation factor P-like protein (188 aa).

It belongs to the elongation factor P family.

This is Elongation factor P-like protein from Xylella fastidiosa (strain M23).